The following is a 558-amino-acid chain: Hepatocyte nuclear factor 1-beta (558 aa).

Residues 1-31 (MVSKLTSLQQELLSALLSSGVTKEVLIQALE) form a dimerization region. An HNF-p1 domain is found at 1–32 (MVSKLTSLQQELLSALLSSGVTKEVLIQALEE). Serine 49, serine 52, serine 75, and serine 80 each carry phosphoserine. A disordered region spans residues 66 to 85 (TNGHAKGRLSGDEGSEDGDD). In terms of domain architecture, POU-specific atypical spans 93–188 (KELQALNTEE…ILRQFNQTVQ (96 aa)). The homeobox; HNF1-type DNA-binding region spans 231-311 (MRRNRFKWGP…NRRKEEAFRQ (81 aa)). The disordered stretch occupies residues 323 to 348 (THNLNPLLTHGSPHHQPSSSPPNKMS).

The protein belongs to the HNF1 homeobox family. Binds DNA as a dimer. Can form homodimer or heterodimer with HNF1-alpha. Interacts (via HNF-p1 domain) with PCBD1; the interaction increases its transactivation activity.

It is found in the nucleus. In terms of biological role, transcription factor that binds to the inverted palindrome 5'-GTTAATNATTAAC-3'. Binds to the FPC element in the cAMP regulatory unit of the PLAU gene. Transcriptional activity is increased by coactivator PCBD1. In Mus musculus (Mouse), this protein is Hepatocyte nuclear factor 1-beta (Hnf1b).